Here is a 251-residue protein sequence, read N- to C-terminus: Haloacid dehalogenase-like hydrolase domain-containing protein 3 (251 aa).

Residue Lys-15 is modified to N6-acetyllysine; alternate. Lys-15 carries the N6-succinyllysine; alternate modification. The residue at position 130 (Lys-130) is an N6-acetyllysine.

Belongs to the HAD-like hydrolase superfamily.

The chain is Haloacid dehalogenase-like hydrolase domain-containing protein 3 (Hdhd3) from Mus musculus (Mouse).